The sequence spans 298 residues: Protoheme IX farnesyltransferase (298 aa).

The next 9 membrane-spanning stretches (helical) occupy residues 19 to 39 (VMSL…QPVN), 40 to 60 (PFVA…SGAL), 91 to 111 (LAVG…GGNW), 112 to 132 (FAAG…TIWL), 140 to 160 (IVIG…LPTG), 167 to 187 (LLMF…LALF), 213 to 233 (IFAY…TSVG), 236 to 256 (LYLA…WQIL), and 277 to 297 (LSLY…WVGG).

It belongs to the UbiA prenyltransferase family. Protoheme IX farnesyltransferase subfamily. As to quaternary structure, interacts with CtaA.

It localises to the cell inner membrane. It carries out the reaction heme b + (2E,6E)-farnesyl diphosphate + H2O = Fe(II)-heme o + diphosphate. It participates in porphyrin-containing compound metabolism; heme O biosynthesis; heme O from protoheme: step 1/1. In terms of biological role, converts heme B (protoheme IX) to heme O by substitution of the vinyl group on carbon 2 of heme B porphyrin ring with a hydroxyethyl farnesyl side group. In Paracoccus denitrificans, this protein is Protoheme IX farnesyltransferase.